Consider the following 168-residue polypeptide: Peptide deformylase (168 aa).

Fe cation contacts are provided by cysteine 92 and histidine 134. Glutamate 135 is an active-site residue. Histidine 138 provides a ligand contact to Fe cation.

The protein belongs to the polypeptide deformylase family. The cofactor is Fe(2+).

It catalyses the reaction N-terminal N-formyl-L-methionyl-[peptide] + H2O = N-terminal L-methionyl-[peptide] + formate. Functionally, removes the formyl group from the N-terminal Met of newly synthesized proteins. Requires at least a dipeptide for an efficient rate of reaction. N-terminal L-methionine is a prerequisite for activity but the enzyme has broad specificity at other positions. The polypeptide is Peptide deformylase (Azotobacter vinelandii (strain DJ / ATCC BAA-1303)).